A 389-amino-acid chain; its full sequence is MNESSEANDLAIRRQIIDETKCVVVKVGTRVLTTSDGKLDLERVDRLAEQLCRIADTGRQTIMVSSGAVGAGVAKLGLPQRPTDLKSLQAIAAIGQADLIGAYEKSLQKRGRHAAQVLLTRNDLRRRSGYLHVRNALNGIDELGAIAVVNENDSVAVSELKTTFGDNDRLAAQVAGLFNDVMLILLTDVSALYDGHPDEKDSQPIHMVHDVDDGVMALVDDQVSTVSKGGMGGKLRASKLANSHGHPTIIGSGTEEFVLDRIFAGDAVGTLFVPPKRSLKGRRRWIGSSANVAGTLFLDQGAVDAIQKHGRSLLAIGIQRVEGTFAHGNVVRLVGPNGEEFGRGLSNYRSHEVARIAGKPSEQIEWILGHRPYENVIHRNNLVLRIVPE.

Lys-26 is a binding site for ATP. Residues Ser-66, Asp-153, and Asn-167 each coordinate substrate. 187–188 is a binding site for ATP; sequence TD. In terms of domain architecture, PUA spans 293–371; sequence AGTLFLDQGA…EQIEWILGHR (79 aa).

The protein belongs to the glutamate 5-kinase family.

It is found in the cytoplasm. It catalyses the reaction L-glutamate + ATP = L-glutamyl 5-phosphate + ADP. Its pathway is amino-acid biosynthesis; L-proline biosynthesis; L-glutamate 5-semialdehyde from L-glutamate: step 1/2. Functionally, catalyzes the transfer of a phosphate group to glutamate to form L-glutamate 5-phosphate. The chain is Glutamate 5-kinase from Rhodopirellula baltica (strain DSM 10527 / NCIMB 13988 / SH1).